Reading from the N-terminus, the 487-residue chain is b(0,+)-type amino acid transporter 1 (487 aa).

Residues 1–15 (MGDTGLRKRREDEKS) show a composition bias toward basic and acidic residues. Residues 1–22 (MGDTGLRKRREDEKSIQSQEPK) form a disordered region. The Cytoplasmic segment spans residues 1-31 (MGDTGLRKRREDEKSIQSQEPKTTSLQKELG). Position 18 is a phosphoserine (Ser-18). A helical membrane pass occupies residues 32–55 (LISGISIIVGTIIGSGIFVSPKSV). 43–47 (IIGSG) provides a ligand contact to L-arginine. The Extracellular portion of the chain corresponds to 56–62 (LSNTEAV). Residues 63–84 (GPCLIIWAACGVLATLGALCFA) form a helical membrane-spanning segment. Residues 85–110 (ELGTMITKSGGEYPYLMEAYGPIPAY) are Cytoplasmic-facing. Residues 111-137 (LFSWASLIVIKPTSFAIICLSFSEYVC) traverse the membrane as a helical segment. Topologically, residues 138–147 (APFYVGCKPP) are extracellular. The next 2 helical transmembrane spans lie at 148 to 169 (QIVV…NSLS) and 170 to 193 (VRLG…IIII). Topologically, residues 194-217 (SGLVLLAQGNTKNFDNSFEGAQLS) are extracellular. Residues 218 to 238 (VGAISLAFYNGLWAYDGWNQL) traverse the membrane as a helical segment. An L-arginine-binding site is contributed by Asp-233. The Cytoplasmic segment spans residues 239–251 (NYITEELRNPYRN). Residues 252 to 274 (LPLAIIIGIPLVTACYILMNVSY) form a helical membrane-spanning segment. Topologically, residues 275–302 (FTVMTATELLQSQAVAVTFGDRVLYPAS) are extracellular. A helical transmembrane segment spans residues 303-325 (WIVPLFVAFSTIGAANGTCFTAG). Over 326–351 (RLIYVAGREGHMLKVLSYISVRRLTP) the chain is Cytoplasmic. A run of 2 helical transmembrane segments spans residues 352 to 370 (APAI…IPGD) and 371 to 391 (INSL…LTIL). Residues 392-410 (GLIVMRFTRKELERPIKVP) are Cytoplasmic-facing. The chain crosses the membrane as a helical span at residues 411 to 431 (VVIPVLMTLISVFLVLAPIIS). The Extracellular portion of the chain corresponds to 432-434 (KPT). Residues 435–450 (WEYLYCVLFILSGLLF) traverse the membrane as a helical segment. Residues 451–487 (YFLFVHYKFGWAQKISKPITMHLQMLMEVVPPEEDPE) lie on the Cytoplasmic side of the membrane.

This sequence belongs to the amino acid-polyamine-organocation (APC) superfamily. As to quaternary structure, disulfide-linked heterodimer composed of the catalytic light chain subunit SLC7A9 and the heavy chain subunit SLC3A1. The heterodimer is the minimal functional unit. Assembles in heterotetramers (dimers of heterodimers) and higher order oligomers; the oligomerization is mediated by SLC3A1 likely to prevent degradation and facilitate heteromer trafficking to the plasma membrane. Interacts with CAV1. Expressed in the brush border membrane in the kidney (at protein level). Kidney, small intestine, liver and placenta.

The protein resides in the apical cell membrane. It localises to the cell membrane. It carries out the reaction L-leucine(out) + L-arginine(in) = L-leucine(in) + L-arginine(out). It catalyses the reaction L-histidine(out) + L-arginine(in) = L-histidine(in) + L-arginine(out). The enzyme catalyses L-arginine(in) + L-phenylalanine(out) = L-arginine(out) + L-phenylalanine(in). The catalysed reaction is L-cysteine(out) + L-arginine(in) = L-cysteine(in) + L-arginine(out). It carries out the reaction L-cystine(out) + L-arginine(in) = L-cystine(in) + L-arginine(out). It catalyses the reaction L-lysine(out) + L-arginine(in) = L-lysine(in) + L-arginine(out). Associates with SLC3A1 to form a functional transporter complex that mediates the electrogenic exchange between cationic amino acids and neutral amino acids, with a stoichiometry of 1:1. Has system b(0,+)-like activity with high affinity for extracellular cationic amino acids and L-cystine and lower affinity for intracellular neutral amino acids. Substrate exchange is driven by high concentration of intracellular neutral amino acids and the intracellular reduction of L-cystine to L-cysteine. Required for reabsorption of L-cystine and dibasic amino acids across the brush border membrane in renal proximal tubules. This chain is b(0,+)-type amino acid transporter 1, found in Homo sapiens (Human).